Consider the following 286-residue polypeptide: Beta-lactamase SHV-3 (286 aa).

A signal peptide spans 1 to 21; that stretch reads MRYIRLCIISLLATLPLAVHA. The active-site Acyl-ester intermediate is Ser66. A disulfide bond links Cys73 and Cys119. The active-site Proton acceptor is the Glu164. 230-232 contacts substrate; that stretch reads KTG.

This sequence belongs to the class-A beta-lactamase family.

The catalysed reaction is a beta-lactam + H2O = a substituted beta-amino acid. In terms of biological role, this enzyme hydrolyzes cefotaxime, ceftazidime and other broad spectrum cephalosporins. In Klebsiella pneumoniae, this protein is Beta-lactamase SHV-3 (bla).